The sequence spans 315 residues: Uracil-DNA glycosylase (315 aa).

The segment covering 35 to 80 has biased composition (low complexity); it reads AAAAAPAGAGAGASKPARPPAAARPAKGTPAASAATTATGADASAP. Residues 35–88 are disordered; it reads AAAAAPAGAGAGASKPARPPAAARPAKGTPAASAATTATGADASAPAPDPGAPT. D158 functions as the Proton acceptor in the catalytic mechanism.

This sequence belongs to the uracil-DNA glycosylase (UDG) superfamily. UNG family.

The protein localises to the host nucleus. It carries out the reaction Hydrolyzes single-stranded DNA or mismatched double-stranded DNA and polynucleotides, releasing free uracil.. In terms of biological role, excises uracil residues from the DNA which can arise as a result of misincorporation of dUMP residues by DNA polymerase or deamination of cytosines. Therefore may reduce deleterious uracil incorporation into the viral genome, particularly in terminally differentiated cells which lack DNA repair enzymes. This is Uracil-DNA glycosylase (UL2) from Suid herpesvirus 1 (strain Indiana-Funkhauser / Becker) (SuHV-1).